The primary structure comprises 484 residues: Fumigaclavine B O-acetyltransferase ifgI (484 aa).

Belongs to the fumigaclavine B O-acetyltransferase family. In terms of assembly, monomer.

The catalysed reaction is fumigaclavine B + acetyl-CoA = fumigaclavine A + CoA. Its pathway is alkaloid biosynthesis; ergot alkaloid biosynthesis. Fumigaclavine B O-acetyltransferase; part of the gene cluster that mediates the biosynthesis of isofumigaclavines, fungal ergot alkaloids. The tryptophan dimethylallyltransferase ifgA catalyzes the first step of ergot alkaloid biosynthesis by condensing dimethylallyl diphosphate (DMAP) and tryptophan to form 4-dimethylallyl-L-tryptophan. The second step is catalyzed by the methyltransferase ifgB that methylates 4-dimethylallyl-L-tryptophan in the presence of S-adenosyl-L-methionine, resulting in the formation of N-methyl-dimethylallyl-L-tryptophan. The catalase ifgD and the FAD-dependent oxidoreductase ifgC then transform N-methyl-dimethylallyl-L-tryptophan to chanoclavine-I which is further oxidized by ifgE in the presence of NAD(+), resulting in the formation of chanoclavine-I aldehyde. The chanoclavine-I aldehyde reductases ifgG and/or fgaOx3 reduce chanoclavine-I aldehyde to dihydrochanoclavine-I aldehyde that spontaneously dehydrates to form 6,8-dimethyl-6,7-didehydroergoline. The festuclavine dehydrogenases ifgF1 and/or ifgF2 then catalyze the reduction of 6,8-dimethyl-6,7-didehydroergoline to form festuclavine. Hydrolysis of festuclavine by a yet undetermined cytochrome P450 monooxygenase (called ifgH) then leads to the formation of isofumigaclavine B which is in turn acetylated by ifgI to isofumigaclavine A. Penicillium roqueforti has interestingly at least two sets of genes for the consumption of chanoclavine-I aldehyde on three different loci, the OYEs ifgG/fgaOx3 and the festuclavine synthase homologs ifgF1/ifgF2. The reason for the duplication of these genes is unclear, probably to ensure the conversion of chanoclavine-I aldehyde by differential gene expression under various environmental conditions. The polypeptide is Fumigaclavine B O-acetyltransferase ifgI (Penicillium roqueforti (strain FM164)).